A 203-amino-acid polypeptide reads, in one-letter code: Dephospho-CoA kinase (203 aa).

Residues K3 to N202 enclose the DPCK domain. G11–T16 lines the ATP pocket.

It belongs to the CoaE family.

The protein localises to the cytoplasm. It carries out the reaction 3'-dephospho-CoA + ATP = ADP + CoA + H(+). It participates in cofactor biosynthesis; coenzyme A biosynthesis; CoA from (R)-pantothenate: step 5/5. In terms of biological role, catalyzes the phosphorylation of the 3'-hydroxyl group of dephosphocoenzyme A to form coenzyme A. This Rhizobium etli (strain ATCC 51251 / DSM 11541 / JCM 21823 / NBRC 15573 / CFN 42) protein is Dephospho-CoA kinase.